Consider the following 359-residue polypeptide: Photosystem II protein D1 2 (359 aa).

A run of 3 helical transmembrane segments spans residues 29-46 (YVGWFGVLMIPTLLAATT), 118-133 (HFLIGIYAYMGREWEL), and 142-156 (WICVAYSAPVAAASA). Histidine 118 contacts chlorophyll a. Tyrosine 126 contacts pheophytin a. Positions 170 and 189 each coordinate [CaMn4O5] cluster. The helical transmembrane segment at 197-218 (FHMLGVAGVFGGSLFSAMHGSL) threads the bilayer. Chlorophyll a is bound at residue histidine 198. A quinone contacts are provided by residues histidine 215 and 264 to 265 (SF). Histidine 215 contributes to the Fe cation binding site. Fe cation is bound at residue histidine 272. A helical transmembrane segment spans residues 274-288 (FLAAWPVVGIWFTAL). Positions 332, 333, 342, and 344 each coordinate [CaMn4O5] cluster. A propeptide spanning residues 345–359 (AAESTPVALQAPAIG) is cleaved from the precursor.

This sequence belongs to the reaction center PufL/M/PsbA/D family. PSII is composed of 1 copy each of membrane proteins PsbA, PsbB, PsbC, PsbD, PsbE, PsbF, PsbH, PsbI, PsbJ, PsbK, PsbL, PsbM, PsbT, PsbX, PsbY, PsbZ, Psb30/Ycf12, peripheral proteins PsbO, CyanoQ (PsbQ), PsbU, PsbV and a large number of cofactors. It forms dimeric complexes. The D1/D2 heterodimer binds P680, chlorophylls that are the primary electron donor of PSII, and subsequent electron acceptors. It shares a non-heme iron and each subunit binds pheophytin, quinone, additional chlorophylls, carotenoids and lipids. D1 provides most of the ligands for the Mn4-Ca-O5 cluster of the oxygen-evolving complex (OEC). There is also a Cl(-1) ion associated with D1 and D2, which is required for oxygen evolution. The PSII complex binds additional chlorophylls, carotenoids and specific lipids. is required as a cofactor. Post-translationally, tyr-161 forms a radical intermediate that is referred to as redox-active TyrZ, YZ or Y-Z. C-terminally processed by CtpA; processing is essential to allow assembly of the oxygen-evolving complex and thus photosynthetic growth.

The protein resides in the cellular thylakoid membrane. It carries out the reaction 2 a plastoquinone + 4 hnu + 2 H2O = 2 a plastoquinol + O2. In terms of biological role, photosystem II (PSII) is a light-driven water:plastoquinone oxidoreductase that uses light energy to abstract electrons from H(2)O, generating O(2) and a proton gradient subsequently used for ATP formation. It consists of a core antenna complex that captures photons, and an electron transfer chain that converts photonic excitation into a charge separation. The D1/D2 (PsbA/PsbD) reaction center heterodimer binds P680, the primary electron donor of PSII as well as several subsequent electron acceptors. This chain is Photosystem II protein D1 2, found in Synechococcus sp. (strain CC9311).